Consider the following 165-residue polypeptide: Protein SprT (165 aa).

One can recognise a SprT-like domain in the interval 10–157 (EACYRQAEDF…YCRRCKATLV (148 aa)). A Zn(2+)-binding site is contributed by H69. Residue E70 is part of the active site. H73 contributes to the Zn(2+) binding site.

This sequence belongs to the SprT family. The cofactor is Zn(2+).

The protein localises to the cytoplasm. The protein is Protein SprT of Pseudomonas paraeruginosa (strain DSM 24068 / PA7) (Pseudomonas aeruginosa (strain PA7)).